The chain runs to 119 residues: Large ribosomal subunit protein bL20 (119 aa).

The protein belongs to the bacterial ribosomal protein bL20 family.

Binds directly to 23S ribosomal RNA and is necessary for the in vitro assembly process of the 50S ribosomal subunit. It is not involved in the protein synthesizing functions of that subunit. This is Large ribosomal subunit protein bL20 from Paracoccus denitrificans (strain Pd 1222).